The primary structure comprises 417 residues: MAIDKHATPMLDQLETGPWPSFISGIKRLRDQHPDARINAVTNDLLGQLEHSYETRKGYWKGGTVSVFGYGGGIIPRFSEVGKVFPSSKEFHTVRVQPPAGNHYTTAMLRQLADTWEKYGSGLITFHGQTGNIMFIGVDTPNTQNFFDEINDYGWDLGGAGPCVRTAMSCVGSARCEMSCTNELKAHRLLVNNFTDDVHRPALPYKFKFKVSGCPNDCQNAIERSDFAVLGTWRDDMKVDQAEVKHYIADKGRQYYIDNVITRCPTKALSLNDDDTLDVNNRDCVRCMHCLNVMPKALHPGDDKGVTILIGGKRTLKIGDLMGTVVVPFKKLETEEDYESLVELAETIIDFWAENGLEHERCGEMIERIGLANFLEGIGIEPDPNMLSHPRQSSYIRMDGWDEAAEEWFARQAEAGR.

Residues Cys-170, Cys-176, Cys-214, Cys-218, Cys-264, Cys-284, Cys-287, and Cys-290 each coordinate [4Fe-4S] cluster. Siroheme is bound at residue Cys-218.

The cofactor is [4Fe-4S] cluster. Requires siroheme as cofactor.

It carries out the reaction [DsrC protein]-trisulfide + NAD(+) + 3 H2O = [DsrC protein]-dithiol + sulfite + NADH + 3 H(+). Its function is as follows. Catalyzes the reduction of sulfite to sulfide. This is the terminal oxidation reaction in sulfate respiration. The polypeptide is Sulfite reductase, dissimilatory-type subunit alpha (dsrA) (Allochromatium vinosum (strain ATCC 17899 / DSM 180 / NBRC 103801 / NCIMB 10441 / D) (Chromatium vinosum)).